Consider the following 318-residue polypeptide: NADH-ubiquinone oxidoreductase chain 1 (318 aa).

9 helical membrane passes run Phe-2–Leu-22, Pro-37–Ile-57, Leu-69–Met-89, Leu-100–Gly-120, Val-136–Met-156, His-171–Ala-191, Ile-231–Phe-251, Glu-253–Val-273, and Phe-293–Gly-313.

Belongs to the complex I subunit 1 family. As to quaternary structure, core subunit of respiratory chain NADH dehydrogenase (Complex I) which is composed of 45 different subunits.

The protein localises to the mitochondrion inner membrane. It carries out the reaction a ubiquinone + NADH + 5 H(+)(in) = a ubiquinol + NAD(+) + 4 H(+)(out). Functionally, core subunit of the mitochondrial membrane respiratory chain NADH dehydrogenase (Complex I) which catalyzes electron transfer from NADH through the respiratory chain, using ubiquinone as an electron acceptor. Essential for the catalytic activity and assembly of complex I. The protein is NADH-ubiquinone oxidoreductase chain 1 (MT-ND1) of Zaedyus pichiy (Pichi).